A 432-amino-acid chain; its full sequence is Homeobox protein Hox-D3 (432 aa).

Disordered regions lie at residues 43 to 62, 68 to 197, 253 to 280, and 400 to 432; these read YSTP…LDTD, CSIQ…SKRV, QKAK…AGHV, and HHGP…LTHL. A compositionally biased stretch (gly residues) spans 97–106; it reads NSQGGGGGSQ. Residues 116–131 are compositionally biased toward pro residues; it reads PPQPPPPPPTLPPSSP. The segment covering 148–158 has biased composition (polar residues); that stretch reads NASSSSATISK. The Antp-type hexapeptide signature appears at 160-165; the sequence is IFPWMK. The homeobox DNA-binding region spans 194–253; sequence SKRVRTAYTSAQLVELEKEFHFNRYLCRPRRVEMANLLNLTERQIKIWFQNRRMKYKKDQ.

The protein belongs to the Antp homeobox family.

The protein localises to the nucleus. Its function is as follows. Sequence-specific transcription factor which is part of a developmental regulatory system that provides cells with specific positional identities on the anterior-posterior axis. The sequence is that of Homeobox protein Hox-D3 (HOXD3) from Homo sapiens (Human).